The sequence spans 150 residues: Catabolic 3-dehydroquinase (150 aa).

Residue tyrosine 24 is the Proton acceptor of the active site. Asparagine 75, histidine 81, and aspartate 88 together coordinate substrate. The Proton donor role is filled by histidine 101. Substrate contacts are provided by residues 102–103 and arginine 112; that span reads IS.

Belongs to the type-II 3-dehydroquinase family. Homododecamer. Adopts a ring-like structure, composed of an arrangement of two hexameric rings stacked on top of one another.

It carries out the reaction 3-dehydroquinate = 3-dehydroshikimate + H2O. It functions in the pathway aromatic compound metabolism; 3,4-dihydroxybenzoate biosynthesis; 3,4-dihydroxybenzoate from 3-dehydroquinate: step 1/2. In terms of biological role, is involved in the catabolism of quinate. Allows the utilization of quinate as carbon source via the beta-ketoadipate pathway. This chain is Catabolic 3-dehydroquinase, found in Verticillium alfalfae (strain VaMs.102 / ATCC MYA-4576 / FGSC 10136) (Verticillium wilt of alfalfa).